Consider the following 295-residue polypeptide: Threonine/homoserine exporter RhtA (295 aa).

Over 1–9 the chain is Cytoplasmic; that stretch reads MPGSLRKMP. A helical membrane pass occupies residues 10 to 30; sequence VWLPIVILLVAMASIQGGASL. One can recognise an EamA 1 domain in the interval 30–135; the sequence is LAKSLFPLVG…VLAVLGLWFL (106 aa). The Periplasmic segment spans residues 31–38; that stretch reads AKSLFPLV. A helical membrane pass occupies residues 39–59; the sequence is GAPGVTALRLALGTLILIAFF. The Cytoplasmic segment spans residues 60 to 71; that stretch reads KPWRLRFAKEQR. The chain crosses the membrane as a helical span at residues 72 to 92; sequence LPLLFYGVSLGGMNYLFYLSI. Gln93 is a topological domain (periplasmic). A helical membrane pass occupies residues 94 to 114; it reads TVPLGIAVALEFTGPLAVALF. Topologically, residues 115 to 118 are cytoplasmic; it reads SSRR. A helical transmembrane segment spans residues 119-139; sequence PVDFVWVVLAVLGLWFLLPLG. Over 140–146 the chain is Periplasmic; that stretch reads QDVSHVD. Residues 147–167 traverse the membrane as a helical segment; that stretch reads LTGCALALGAGACWAIYILSG. The 120-residue stretch at 159-278 folds into the EamA 2 domain; the sequence is CWAIYILSGQ…LGAIIAASMG (120 aa). Residues 168–175 lie on the Cytoplasmic side of the membrane; it reads QRAGAEHG. A helical membrane pass occupies residues 176–196; sequence PATVAIGSLIAALIFVPIGAL. Residues 197–200 lie on the Periplasmic side of the membrane; sequence QAGE. A helical transmembrane segment spans residues 201-221; sequence ALWHWSVIPLGLAVAILSTAL. The Cytoplasmic portion of the chain corresponds to 222–237; sequence PYSLEMIALTRLPTRT. Residues 238–258 traverse the membrane as a helical segment; sequence FGTLMSMEPALAAVSGMIFLG. Over 259-262 the chain is Periplasmic; it reads ETLT. The chain crosses the membrane as a helical span at residues 263-283; that stretch reads PIQLLALGAIIAASMGSTLTV. Topologically, residues 284–295 are cytoplasmic; the sequence is RKESKIKELDIN.

Belongs to the drug/metabolite transporter (DMT) superfamily. 10 TMS drug/metabolite exporter (DME) (TC 2.A.7.3) family.

It is found in the cell inner membrane. Involved in the efflux of threonine and homoserine. In Escherichia coli O157:H7, this protein is Threonine/homoserine exporter RhtA (rhtA).